The following is a 298-amino-acid chain: FH protein interacting protein FIP2 (298 aa).

A BTB domain is found at 9 to 80; that stretch reads SMVRLNIGGK…LRDGVIPSLS (72 aa). 4 consecutive Pentapeptide repeat domains span residues 129–165, 166–203, 216–255, and 256–295; these read ERVRFRGVNLSGIDLSKLDLSLVDFSYACLRNVFFSR, TNLQCAKFRNADAEGSIFHNAILRECEFTSANLRGALL, ACLVGCSFCGADLRTAHLQNADLTNANLEGANLEGANLKG, and AKLSNANFKGANLQRAYLRHVNLREAHMEGANLGGANMTG.

Interacts with FH1. In terms of tissue distribution, expressed in all tissues but preferentially in roots and flowers.

It functions in the pathway protein modification; protein ubiquitination. May act as a substrate-specific adapter of an E3 ubiquitin-protein ligase complex (CUL3-RBX1-BTB) which mediates the ubiquitination and subsequent proteasomal degradation of target proteins. This is FH protein interacting protein FIP2 (FIP2) from Arabidopsis thaliana (Mouse-ear cress).